Here is a 159-residue protein sequence, read N- to C-terminus: MINYLKSFFLYEIIRGLALTLKYFFKAKVTINYPYEKSPVSPRFKGEHALRRYENGEERCIACKLCEAICPAQAIVIEADEREDGSRRTTRYDIDMTKCIYCGLCQEACPVDAIVEGPNFEFASLTHTALIYDKEKLLQNGDRWEQALANKLHKDYEYR.

2 4Fe-4S ferredoxin-type domains span residues 51 to 80 and 90 to 119; these read RRYE…IEAD and TRYD…EGPN. Residues cysteine 60, cysteine 63, cysteine 66, cysteine 70, cysteine 99, cysteine 102, cysteine 105, and cysteine 109 each coordinate [4Fe-4S] cluster.

It belongs to the complex I 23 kDa subunit family. As to quaternary structure, NDH-1 is composed of 14 different subunits. Subunits NuoA, H, J, K, L, M, N constitute the membrane sector of the complex. Requires [4Fe-4S] cluster as cofactor.

It is found in the cell inner membrane. It carries out the reaction a quinone + NADH + 5 H(+)(in) = a quinol + NAD(+) + 4 H(+)(out). In terms of biological role, NDH-1 shuttles electrons from NADH, via FMN and iron-sulfur (Fe-S) centers, to quinones in the respiratory chain. The immediate electron acceptor for the enzyme in this species is believed to be ubiquinone. Couples the redox reaction to proton translocation (for every two electrons transferred, four hydrogen ions are translocated across the cytoplasmic membrane), and thus conserves the redox energy in a proton gradient. The protein is NADH-quinone oxidoreductase subunit I of Rickettsia bellii (strain OSU 85-389).